We begin with the raw amino-acid sequence, 345 residues long: Selenide, water dikinase (345 aa).

The active site involves C15. ATP contacts are provided by residues K18 and 46-48 (SKD). Residue D49 coordinates Mg(2+). ATP contacts are provided by residues D66, D89, and 137 to 139 (GHS). Position 89 (D89) interacts with Mg(2+). D225 lines the Mg(2+) pocket.

It belongs to the selenophosphate synthase 1 family. Class I subfamily. In terms of assembly, homodimer. It depends on Mg(2+) as a cofactor.

It carries out the reaction hydrogenselenide + ATP + H2O = selenophosphate + AMP + phosphate + 2 H(+). In terms of biological role, synthesizes selenophosphate from selenide and ATP. The protein is Selenide, water dikinase of Aeromonas hydrophila subsp. hydrophila (strain ATCC 7966 / DSM 30187 / BCRC 13018 / CCUG 14551 / JCM 1027 / KCTC 2358 / NCIMB 9240 / NCTC 8049).